The primary structure comprises 1048 residues: Calcium-transporting ATPase, endoplasmic reticulum-type (1048 aa).

The Cytoplasmic portion of the chain corresponds to 1 to 63 (MEEKPFPAWS…WRLVLEQFDD (63 aa)). A helical membrane pass occupies residues 64 to 84 (TLVKILLGAAFISFVLAYVNQ). At 85-93 (DETGESGFE) the chain is on the lumenal side. A helical transmembrane segment spans residues 94-114 (AYVEPLVILWILVLNAIVGVW). Residues 115–213 (QESNAEKALE…DCELQAKENM (99 aa)) are Cytoplasmic-facing. Residues 214–234 (VFAGTTVVNGSCICIVVNTGM) traverse the membrane as a helical segment. Topologically, residues 235-267 (CTEIGKIQRQIHDASMEESDTPLKKKLDEFGNR) are lumenal. The helical transmembrane segment at 268–288 (LTFAIGVVCLVVWAINYKYFL) threads the bilayer. Over 289-312 (SWEVVDDWPSDFRFSFEKCAYYFK) the chain is Cytoplasmic. A helical membrane pass occupies residues 313–333 (IAVALAVAAIPEGLPSVITTC). The Ca(2+) site is built by valine 319, alanine 320, isoleucine 322, and glutamate 324. Residues 334-800 (LALGTRKMAQ…ISSNVGEVIS (467 aa)) are Lumenal-facing. The 4-aspartylphosphate intermediate role is filled by aspartate 366. Positions 728 and 732 each coordinate Mg(2+). Ca(2+)-binding residues include asparagine 794 and glutamate 797. Residues 801–821 (IFLTAVLGIPECLIPVQLLWV) traverse the membrane as a helical segment. Residues asparagine 822, threonine 825, and aspartate 826 each coordinate Ca(2+). Residues 822-862 (NLVTDGPPATALGFNPADVDIMQKPPRKNTDALINSWVFFR) lie on the Cytoplasmic side of the membrane. The chain crosses the membrane as a helical span at residues 863–883 (YMVIGSYVGIATVGIFIVWYT). The Lumenal portion of the chain corresponds to 884–944 (QASFLGINIV…CEYFTVGKVK (61 aa)). Residues 945–965 (AMTLSLSVLVAIEMFNSLNAL) traverse the membrane as a helical segment. Glutamate 957 is a Ca(2+) binding site. Residues 966 to 981 (SEDNSLIKMPPWRNPW) lie on the Cytoplasmic side of the membrane. The helical transmembrane segment at 982-1002 (LLVAMSLSFALHSVILYVPFL) threads the bilayer. The Lumenal segment spans residues 1003–1007 (ADIFG). The chain crosses the membrane as a helical span at residues 1008 to 1028 (IVPLSLYEWLLVILLSAPVIL). Topologically, residues 1029–1048 (IDEVLKFVGRRRRRTKLKAA) are cytoplasmic.

It belongs to the cation transport ATPase (P-type) (TC 3.A.3) family. Type IIA subfamily. 9-fold higher level in roots compared with leaves.

The protein resides in the endoplasmic reticulum membrane. The enzyme catalyses Ca(2+)(in) + ATP + H2O = Ca(2+)(out) + ADP + phosphate + H(+). In terms of biological role, this magnesium-dependent enzyme catalyzes the hydrolysis of ATP coupled with the translocation of calcium from the cytosol to an endomembrane compartment. In Solanum lycopersicum (Tomato), this protein is Calcium-transporting ATPase, endoplasmic reticulum-type.